We begin with the raw amino-acid sequence, 72 residues long: Translation initiation factor IF-1 (72 aa).

An S1-like domain is found at 1-72; sequence MAKEDTIQMQ…TRARIVFRAR (72 aa).

It belongs to the IF-1 family. In terms of assembly, component of the 30S ribosomal translation pre-initiation complex which assembles on the 30S ribosome in the order IF-2 and IF-3, IF-1 and N-formylmethionyl-tRNA(fMet); mRNA recruitment can occur at any time during PIC assembly.

It is found in the cytoplasm. Its function is as follows. One of the essential components for the initiation of protein synthesis. Stabilizes the binding of IF-2 and IF-3 on the 30S subunit to which N-formylmethionyl-tRNA(fMet) subsequently binds. Helps modulate mRNA selection, yielding the 30S pre-initiation complex (PIC). Upon addition of the 50S ribosomal subunit IF-1, IF-2 and IF-3 are released leaving the mature 70S translation initiation complex. In Neisseria gonorrhoeae (strain ATCC 700825 / FA 1090), this protein is Translation initiation factor IF-1.